An 88-amino-acid polypeptide reads, in one-letter code: UPF0250 protein PM1928 (88 aa).

It belongs to the UPF0250 family.

The sequence is that of UPF0250 protein PM1928 from Pasteurella multocida (strain Pm70).